The chain runs to 335 residues: SLAM family member 7 (335 aa).

Positions 1-22 (MAGSPTCLTLIYILWQLTGSAA) are cleaved as a signal peptide. Residues 23 to 124 (SGPVKELVGS…PSTQEYVLHV (102 aa)) enclose the Ig-like V-type domain. The Extracellular segment spans residues 23 to 226 (SGPVKELVGS…GAADDPDSSM (204 aa)). Residues Asn98, Asn142, Asn148, Asn172, Asn176, and Asn204 are each glycosylated (N-linked (GlcNAc...) asparagine). An Ig-like C2-type domain is found at 131 to 206 (PKVTMGLQSN…ARNPVSRNFS (76 aa)). 2 disulfides stabilise this stretch: Cys145–Cys215 and Cys151–Cys195. Residues 227-247 (VLLCLLLVPLLLSLFVLGLFL) form a helical membrane-spanning segment. The Cytoplasmic portion of the chain corresponds to 248–335 (WFLKRERQEE…PRLFAYENVI (88 aa)). The tract at residues 278–296 (SGENTEYDTIPHTNRTILK) is interaction with FYN when phosphorylated at Tyr-284. An ITSM motif is present at residues 302–307 (TVYSTV).

In terms of assembly, isoform 1 binds to SH2D1A when its cytoplasmic tail is phosphorylated in the presence of FYN (in vitro); low affinity binding, the physiological relevance of the interaction is questioned. Interacts with SH2D1B; in NK cells. Interacts (via ITSM phosphorylated on Tyr-302) with SH2D1B, PTPN6/SHP-1, PTPN11/SHP-2, INPP5D/SHIP1, CSK and FYN. As to expression, expressed in spleen, lymph node, peripheral blood leukocytes, bone marrow, small intestine, stomach, appendix, lung and trachea. Expression was detected in NK cells, activated B-cells, NK-cell line but not in promyelocytic, B-, or T-cell lines. Expressed in monocytes. Isoform 3 is expressed at much lower level than isoform 1.

Its subcellular location is the membrane. Functionally, self-ligand receptor of the signaling lymphocytic activation molecule (SLAM) family. SLAM receptors triggered by homo- or heterotypic cell-cell interactions are modulating the activation and differentiation of a wide variety of immune cells and thus are involved in the regulation and interconnection of both innate and adaptive immune response. Activities are controlled by presence or absence of small cytoplasmic adapter proteins, SH2D1A/SAP and/or SH2D1B/EAT-2. Isoform 1 mediates NK cell activation through a SH2D1A-independent extracellular signal-regulated ERK-mediated pathway. Positively regulates NK cell functions by a mechanism dependent on phosphorylated SH2D1B. Downstream signaling implicates PLCG1, PLCG2 and PI3K. In addition to heterotypic NK cells-target cells interactions also homotypic interactions between NK cells may contribute to activation. However, in the absence of SH2D1B, inhibits NK cell function. Also acts inhibitory in T-cells. May play a role in lymphocyte adhesion. In LPS-activated monocytes negatively regulates production of pro-inflammatory cytokines. In terms of biological role, isoform 3 does not mediate any NK cell activation. The chain is SLAM family member 7 (SLAMF7) from Homo sapiens (Human).